A 579-amino-acid polypeptide reads, in one-letter code: Lens epithelium-derived growth factor (579 aa).

A PWWP domain is found at 1 to 64; sequence MSRDFKPGDL…PKDIFPYSEN (64 aa). Disordered regions lie at residues 62–81, 88–203, 215–397, and 492–579; these read SENK…NEGL, PKVK…EEAA, AAPV…SMDS, and AEQK…FENK. Residues 94 to 107 show a composition bias toward polar residues; sequence HQPSHPAVNTSIKE. The segment covering 153–173 has biased composition (basic and acidic residues); that stretch reads KEMHSTKEDEEPSEKNSKEGV. Basic residues predominate over residues 184–193; the sequence is VARRGRKRKA. A Nuclear localization signal motif is present at residues 186 to 196; sequence RRGRKRKAEKQ. Low complexity predominate over residues 215–224; the sequence is AAPVTVSPKV. The span at 261–308 shows a compositional bias: basic and acidic residues; the sequence is EEEKAKKKGPDEKPKKQGKKDEEGQKEEEKPKKEYDKKDGKKEAEPKR. Residues 321–330 show a composition bias toward acidic residues; it reads DSEDEGGEEE. Positions 334–349 are enriched in basic residues; it reads KKKGGRSFQSTHRRNI. Residues 347-442 adopt a coiled-coil conformation; that stretch reads RNIMRGQHEK…SMQQAQKHTE (96 aa). Composition is skewed to basic and acidic residues over residues 352–397 and 492–522; these read GQHE…SMDS and AEQK…KDQT. An integrase-binding domain (IBD) region spans residues 387–464; it reads MEKKRETSMD…VSQVIMEKST (78 aa). Residues 530–543 are compositionally biased toward polar residues; it reads GSETQDTNQSQHNG. Basic and acidic residues predominate over residues 544–579; it reads ENAEEKDKLEVASKKKTCGEESELEKPAKESAFENK.

It belongs to the HDGF family.

Its subcellular location is the nucleus. In terms of biological role, transcriptional coactivator involved in neuroepithelial stem cell differentiation and neurogenesis. Involved in particular in lens epithelial cell gene regulation and stress responses. May play an important role in lens epithelial to fiber cell terminal differentiation. May play a protective role during stress-induced apoptosis. The sequence is that of Lens epithelium-derived growth factor (PSIP1) from Gallus gallus (Chicken).